The primary structure comprises 120 residues: Protein GP96 (120 aa).

It belongs to the herpesviridae UL96 family.

The protein is Protein GP96 of Cavia porcellus (Guinea pig).